A 249-amino-acid chain; its full sequence is Phosphate import ATP-binding protein PstB 2 (249 aa).

Residues 4–244 (IEVRDLDLFY…PKDKRTEDYI (241 aa)) form the ABC transporter domain. 36–43 (GPSGCGKS) is an ATP binding site.

The protein belongs to the ABC transporter superfamily. Phosphate importer (TC 3.A.1.7) family. As to quaternary structure, the complex is composed of two ATP-binding proteins (PstB), two transmembrane proteins (PstC and PstA) and a solute-binding protein (PstS).

The protein localises to the cell membrane. It carries out the reaction phosphate(out) + ATP + H2O = ADP + 2 phosphate(in) + H(+). Part of the ABC transporter complex PstSACB involved in phosphate import. Responsible for energy coupling to the transport system. The polypeptide is Phosphate import ATP-binding protein PstB 2 (Caldanaerobacter subterraneus subsp. tengcongensis (strain DSM 15242 / JCM 11007 / NBRC 100824 / MB4) (Thermoanaerobacter tengcongensis)).